The sequence spans 150 residues: D-aminoacyl-tRNA deacylase (150 aa).

The short motif at 136 to 137 (GP) is the Gly-cisPro motif, important for rejection of L-amino acids element.

Belongs to the DTD family. In terms of assembly, homodimer.

The protein localises to the cytoplasm. It carries out the reaction glycyl-tRNA(Ala) + H2O = tRNA(Ala) + glycine + H(+). It catalyses the reaction a D-aminoacyl-tRNA + H2O = a tRNA + a D-alpha-amino acid + H(+). In terms of biological role, an aminoacyl-tRNA editing enzyme that deacylates mischarged D-aminoacyl-tRNAs. Also deacylates mischarged glycyl-tRNA(Ala), protecting cells against glycine mischarging by AlaRS. Acts via tRNA-based rather than protein-based catalysis; rejects L-amino acids rather than detecting D-amino acids in the active site. By recycling D-aminoacyl-tRNA to D-amino acids and free tRNA molecules, this enzyme counteracts the toxicity associated with the formation of D-aminoacyl-tRNA entities in vivo and helps enforce protein L-homochirality. This Staphylococcus saprophyticus subsp. saprophyticus (strain ATCC 15305 / DSM 20229 / NCIMB 8711 / NCTC 7292 / S-41) protein is D-aminoacyl-tRNA deacylase.